A 57-amino-acid polypeptide reads, in one-letter code: Large ribosomal subunit protein bL32B (57 aa).

The protein belongs to the bacterial ribosomal protein bL32 family.

The sequence is that of Large ribosomal subunit protein bL32B (rpmF2) from Listeria innocua serovar 6a (strain ATCC BAA-680 / CLIP 11262).